A 463-amino-acid polypeptide reads, in one-letter code: Exodeoxyribonuclease 7 large subunit (463 aa).

Belongs to the XseA family. As to quaternary structure, heterooligomer composed of large and small subunits.

It localises to the cytoplasm. It carries out the reaction Exonucleolytic cleavage in either 5'- to 3'- or 3'- to 5'-direction to yield nucleoside 5'-phosphates.. Bidirectionally degrades single-stranded DNA into large acid-insoluble oligonucleotides, which are then degraded further into small acid-soluble oligonucleotides. The sequence is that of Exodeoxyribonuclease 7 large subunit from Klebsiella pneumoniae (strain 342).